The sequence spans 1138 residues: Condensin-2 complex subunit G2 (1138 aa).

S30 is modified (phosphoserine). One copy of the HEAT repeat lies at 459-497 (LLPTLRYSLHDNSEKVRVAFVDLLLKIKAVRAAKFWKIC). Residue T1114 is modified to Phosphothreonine.

Component of the condensin-2 complex, which contains the SMC2 and SMC4 heterodimer, and 3 non SMC subunits that probably regulate the complex: NCAPH2, NCAPD3 and NCAPG2. As to expression, expressed in spleen, lung and testis as well as in hematopoietic cell lines.

Its subcellular location is the nucleus. Functionally, regulatory subunit of the condensin-2 complex, a complex which establishes mitotic chromosome architecture and is involved in physical rigidity of the chromatid axis. Is required for early embryonic development and is essential for viability and expansion of the inner cell mass (ICM) of the implanting blastocyst. The protein is Condensin-2 complex subunit G2 (Ncapg2) of Mus musculus (Mouse).